A 288-amino-acid polypeptide reads, in one-letter code: L-threonine kinase (288 aa).

80–90 is an ATP binding site; the sequence is PIAKGMASSTA.

The protein belongs to the GHMP kinase family. PduX subfamily.

Its subcellular location is the cytoplasm. It catalyses the reaction L-threonine + ATP = O-phospho-L-threonine + ADP + H(+). The protein operates within cofactor biosynthesis; adenosylcobalamin biosynthesis. Its pathway is polyol metabolism; 1,2-propanediol degradation. L-threonine kinase that catalyzes the conversion of L-threonine to L-threonine-O-3-phosphate. Involved in the de novo synthesis of adenosylcobalamin (coenzyme B12) and the assimilation of cobyric acid. Its function is as follows. Expression of a cosmid containing the full 21-gene pdu operon in E.coli allows E.coli to grow on 1,2-propanediol (1,2-PD) with the appearance of bacterial microcompartments (BMC) in its cytoplasm. In terms of biological role, the 1,2-PD-specific bacterial microcompartment (BMC) concentrates low levels of 1,2-PD catabolic enzymes, concentrates volatile reaction intermediates thus enhancing pathway flux and keeps the level of toxic, mutagenic propionaldehyde low. This gene probably benefits from its induction via the Pdu promoter, rather than a physical interaction with the BMC. This is L-threonine kinase from Citrobacter freundii.